The sequence spans 352 residues: S-adenosylmethionine:tRNA ribosyltransferase-isomerase (352 aa).

This sequence belongs to the QueA family. As to quaternary structure, monomer.

The protein localises to the cytoplasm. The catalysed reaction is 7-aminomethyl-7-carbaguanosine(34) in tRNA + S-adenosyl-L-methionine = epoxyqueuosine(34) in tRNA + adenine + L-methionine + 2 H(+). Its pathway is tRNA modification; tRNA-queuosine biosynthesis. Functionally, transfers and isomerizes the ribose moiety from AdoMet to the 7-aminomethyl group of 7-deazaguanine (preQ1-tRNA) to give epoxyqueuosine (oQ-tRNA). This Dechloromonas aromatica (strain RCB) protein is S-adenosylmethionine:tRNA ribosyltransferase-isomerase.